A 418-amino-acid chain; its full sequence is Outer membrane protein assembly factor BamB (418 aa).

The first 28 residues, methionine 1–glycine 28, serve as a signal peptide directing secretion. Cysteine 29 carries the N-palmitoyl cysteine lipid modification. A lipid anchor (S-diacylglycerol cysteine) is attached at cysteine 29.

This sequence belongs to the BamB family. As to quaternary structure, part of the Bam complex.

The protein localises to the cell outer membrane. Functionally, part of the outer membrane protein assembly complex, which is involved in assembly and insertion of beta-barrel proteins into the outer membrane. This Alteromonas naphthalenivorans protein is Outer membrane protein assembly factor BamB.